The primary structure comprises 325 residues: tRNA dimethylallyltransferase (325 aa).

11–18 (GPTASGKS) contacts ATP. 13 to 18 (TASGKS) provides a ligand contact to substrate. 2 interaction with substrate tRNA regions span residues 36-39 (DSMQ) and 160-164 (QRLIR).

It belongs to the IPP transferase family. As to quaternary structure, monomer. Mg(2+) serves as cofactor.

It carries out the reaction adenosine(37) in tRNA + dimethylallyl diphosphate = N(6)-dimethylallyladenosine(37) in tRNA + diphosphate. In terms of biological role, catalyzes the transfer of a dimethylallyl group onto the adenine at position 37 in tRNAs that read codons beginning with uridine, leading to the formation of N6-(dimethylallyl)adenosine (i(6)A). The polypeptide is tRNA dimethylallyltransferase (Rickettsia canadensis (strain McKiel)).